Here is a 577-residue protein sequence, read N- to C-terminus: 2-hydroxyacyl-CoA lyase (577 aa).

Residue glutamate 59 coordinates thiamine diphosphate. The interval 412-493 (TMDVGRAVLV…VIVFNNNGVY (82 aa)) is thiamine pyrophosphate binding. 2 residues coordinate Mg(2+): aspartate 462 and asparagine 489.

It belongs to the TPP enzyme family. Homotetramer. Requires Mg(2+) as cofactor. Thiamine diphosphate serves as cofactor.

It catalyses the reaction an (R)-2-hydroxy-long-chain-fatty acyl-CoA = a long-chain fatty aldehyde + formyl-CoA. It carries out the reaction a 2-hydroxy-3-methyl fatty acyl-CoA = a 2-methyl-branched fatty aldehyde + formyl-CoA. In terms of biological role, catalyzes a carbon-carbon cleavage reaction; cleaves a 2-hydroxy-3-methylacyl-CoA into formyl-CoA and a 2-methyl-branched fatty aldehyde. This is 2-hydroxyacyl-CoA lyase from Oryza sativa subsp. japonica (Rice).